A 77-amino-acid chain; its full sequence is U11-lycotoxin-Ls1a (77 aa).

An N-terminal signal peptide occupies residues Met1–Ala20. The propeptide occupies Glu21–Arg26.

It belongs to the neurotoxin 19 (CSTX) family. 10 (U11-Lctx) subfamily. Contains 4 disulfide bonds. In terms of tissue distribution, expressed by the venom gland.

It localises to the secreted. The polypeptide is U11-lycotoxin-Ls1a (Lycosa singoriensis (Wolf spider)).